The sequence spans 267 residues: uncharacterized protein (267 aa).

Residues 72–267 (LTENNNNNNT…EEKKKKKKKK (196 aa)) are disordered. Residues 122–145 (DSVSSSTTTTIITNNKKINNNNNN) are compositionally biased toward low complexity. Residues 159–175 (ENEKSVQKSKKEKESPK) show a composition bias toward basic and acidic residues. A compositionally biased stretch (low complexity) spans 194 to 218 (SESSSSSSSSSSSESSSSESESSSS).

This is an uncharacterized protein from Dictyostelium discoideum (Social amoeba).